We begin with the raw amino-acid sequence, 1192 residues long: DNA topoisomerase 2 (1192 aa).

ATP contacts are provided by residues Asn64, Asn95, and 142-149; that span reads GTNGVGLK. Residues Glu438, Asp539, and Asp541 each contribute to the Mg(2+) site. The 468-residue stretch at 707 to 1174 folds into the Topo IIA-type catalytic domain; that stretch reads IPNFLDGMTR…PGASVWLEEI (468 aa). Catalysis depends on Tyr800, which acts as the O-(5'-phospho-DNA)-tyrosine intermediate.

It belongs to the type II topoisomerase family. Requires Mg(2+) as cofactor. It depends on Mn(2+) as a cofactor. Ca(2+) serves as cofactor.

The protein resides in the host cytoplasm. The catalysed reaction is ATP-dependent breakage, passage and rejoining of double-stranded DNA.. Its function is as follows. Type II topoisomerase. Processively relaxes supercoiled DNA. Displays DNA-supercoiling activity only when associated with the viral histone-like protein. This chain is DNA topoisomerase 2, found in African swine fever virus (isolate Pig/Kenya/KEN-50/1950) (ASFV).